The primary structure comprises 64 residues: LTCHTCPYNTCANSETCPAGKNICYQKKWEEHQGERIERRCVANCPKLGSNDKSLLCCRRDDCN.

5 cysteine pairs are disulfide-bonded: Cys-3-Cys-24, Cys-6-Cys-11, Cys-17-Cys-41, Cys-45-Cys-57, and Cys-58-Cys-63.

Belongs to the three-finger toxin family. Ancestral subfamily. In terms of tissue distribution, expressed by the venom gland.

The protein localises to the secreted. Produces peripheral paralysis by blocking neuromuscular transmission at the postsynaptic site. Very weak inhibitor of the endogenous nicotinic acetylcholine receptors (nAChR) in the human rhabdomyosarcoma TE 671 cell line. Not toxic to mice by intraperitoneal injection or to zebrafish by injection at the back of the dorsolateral region. This Micrurus surinamensis (Surinam coral snake) protein is Long neurotoxin MS2.